A 173-amino-acid polypeptide reads, in one-letter code: Large ribosomal subunit protein uL10 (173 aa).

This sequence belongs to the universal ribosomal protein uL10 family. Part of the ribosomal stalk of the 50S ribosomal subunit. The N-terminus interacts with L11 and the large rRNA to form the base of the stalk. The C-terminus forms an elongated spine to which L12 dimers bind in a sequential fashion forming a multimeric L10(L12)X complex.

Forms part of the ribosomal stalk, playing a central role in the interaction of the ribosome with GTP-bound translation factors. This Thermus thermophilus (strain ATCC BAA-163 / DSM 7039 / HB27) protein is Large ribosomal subunit protein uL10.